The sequence spans 263 residues: Tryptophan synthase alpha chain (263 aa).

Active-site proton acceptor residues include E47 and D58.

Belongs to the TrpA family. In terms of assembly, tetramer of two alpha and two beta chains.

The protein resides in the plastid. The protein localises to the chloroplast. It carries out the reaction (1S,2R)-1-C-(indol-3-yl)glycerol 3-phosphate + L-serine = D-glyceraldehyde 3-phosphate + L-tryptophan + H2O. It participates in amino-acid biosynthesis; L-tryptophan biosynthesis; L-tryptophan from chorismate: step 5/5. In terms of biological role, the alpha subunit is responsible for the aldol cleavage of indoleglycerol phosphate to indole and glyceraldehyde 3-phosphate. The sequence is that of Tryptophan synthase alpha chain from Antithamnion sp. (Red alga).